Consider the following 378-residue polypeptide: Quinolinate synthase (378 aa).

Iminosuccinate is bound by residues histidine 59 and serine 80. Residue cysteine 125 participates in [4Fe-4S] cluster binding. Iminosuccinate-binding positions include 151-153 (YAN) and serine 168. Residue cysteine 212 coordinates [4Fe-4S] cluster. Residues 238-240 (HPE) and threonine 255 each bind iminosuccinate. [4Fe-4S] cluster is bound at residue cysteine 309.

The protein belongs to the quinolinate synthase family. Type 1 subfamily. [4Fe-4S] cluster is required as a cofactor.

It is found in the cytoplasm. It catalyses the reaction iminosuccinate + dihydroxyacetone phosphate = quinolinate + phosphate + 2 H2O + H(+). It participates in cofactor biosynthesis; NAD(+) biosynthesis; quinolinate from iminoaspartate: step 1/1. In terms of biological role, catalyzes the condensation of iminoaspartate with dihydroxyacetone phosphate to form quinolinate. The chain is Quinolinate synthase from Burkholderia orbicola (strain MC0-3).